The chain runs to 155 residues: Endoribonuclease YbeY (155 aa).

Residues H119, H123, and H129 each contribute to the Zn(2+) site.

It belongs to the endoribonuclease YbeY family. It depends on Zn(2+) as a cofactor.

It is found in the cytoplasm. Its function is as follows. Single strand-specific metallo-endoribonuclease involved in late-stage 70S ribosome quality control and in maturation of the 3' terminus of the 16S rRNA. The polypeptide is Endoribonuclease YbeY (Mycoplasmopsis synoviae (strain 53) (Mycoplasma synoviae)).